Here is a 372-residue protein sequence, read N- to C-terminus: Adaptive-response sensory-kinase SasA (372 aa).

A Histidine kinase domain is found at 147–360; sequence MVAHELRTPL…CFHFTVPVWQ (214 aa). Residue histidine 150 is modified to Phosphohistidine; by autocatalysis.

In terms of assembly, homooligomerizes. Interacts with KaiC. Participates in the KaiBC complex, whose core is composed of a KaiC homohexamer and 6 KaiB.

The enzyme catalyses ATP + protein L-histidine = ADP + protein N-phospho-L-histidine.. Member of the two-component regulatory system SasA/RpaA involved in genome-wide circadian gene expression. One of several clock output pathways. Participates in the Kai clock protein complex, the main circadian regulator in cyanobacteria, via its interaction with KaiC. KaiC enhances the autophosphorylation activity of SasA, which then transfers its phosphate group to RpaA to activate it. In addition to its output function, recruits fold-shifted KaiB (KaiB(fs)) to KaiC to cooperatively form the KaiB(6):KaiC(6) complex (independent of SasA kinase activity). Required for robustness of the circadian rhythm of gene expression and is involved in clock output, also required for adaptation to light/dark cycles. The protein is Adaptive-response sensory-kinase SasA of Prochlorococcus marinus subsp. pastoris (strain CCMP1986 / NIES-2087 / MED4).